A 419-amino-acid chain; its full sequence is Serine hydroxymethyltransferase (419 aa).

(6S)-5,6,7,8-tetrahydrofolate is bound by residues Leu-121 and 125–127; that span reads GHL. Lys-229 bears the N6-(pyridoxal phosphate)lysine mark. Residue 354–356 participates in (6S)-5,6,7,8-tetrahydrofolate binding; that stretch reads SPF.

Belongs to the SHMT family. In terms of assembly, homodimer. It depends on pyridoxal 5'-phosphate as a cofactor.

The protein resides in the cytoplasm. It carries out the reaction (6R)-5,10-methylene-5,6,7,8-tetrahydrofolate + glycine + H2O = (6S)-5,6,7,8-tetrahydrofolate + L-serine. The protein operates within one-carbon metabolism; tetrahydrofolate interconversion. It functions in the pathway amino-acid biosynthesis; glycine biosynthesis; glycine from L-serine: step 1/1. Its function is as follows. Catalyzes the reversible interconversion of serine and glycine with tetrahydrofolate (THF) serving as the one-carbon carrier. This reaction serves as the major source of one-carbon groups required for the biosynthesis of purines, thymidylate, methionine, and other important biomolecules. Also exhibits THF-independent aldolase activity toward beta-hydroxyamino acids, producing glycine and aldehydes, via a retro-aldol mechanism. The polypeptide is Serine hydroxymethyltransferase (Coxiella burnetii (strain RSA 331 / Henzerling II)).